Reading from the N-terminus, the 172-residue chain is 3-hydroxydecanoyl-[acyl-carrier-protein] dehydratase (172 aa).

Residue His71 is part of the active site.

It belongs to the thioester dehydratase family. FabA subfamily. Homodimer.

Its subcellular location is the cytoplasm. It catalyses the reaction a (3R)-hydroxyacyl-[ACP] = a (2E)-enoyl-[ACP] + H2O. It carries out the reaction (3R)-hydroxydecanoyl-[ACP] = (2E)-decenoyl-[ACP] + H2O. The catalysed reaction is (2E)-decenoyl-[ACP] = (3Z)-decenoyl-[ACP]. It functions in the pathway lipid metabolism; fatty acid biosynthesis. Necessary for the introduction of cis unsaturation into fatty acids. Catalyzes the dehydration of (3R)-3-hydroxydecanoyl-ACP to E-(2)-decenoyl-ACP and then its isomerization to Z-(3)-decenoyl-ACP. Can catalyze the dehydratase reaction for beta-hydroxyacyl-ACPs with saturated chain lengths up to 16:0, being most active on intermediate chain length. This Klebsiella pneumoniae (strain 342) protein is 3-hydroxydecanoyl-[acyl-carrier-protein] dehydratase.